The chain runs to 546 residues: CTP synthase (546 aa).

The tract at residues 1–269 (MADTKYIFVT…DKVTLKKLAL (269 aa)) is amidoligase domain. CTP is bound at residue serine 15. A UTP-binding site is contributed by serine 15. 16 to 21 (SLGKGI) lines the ATP pocket. Tyrosine 56 contributes to the L-glutamine binding site. Aspartate 73 contributes to the ATP binding site. Mg(2+) contacts are provided by aspartate 73 and glutamate 143. CTP is bound by residues 150 to 152 (DIE), 190 to 195 (KTKPTQ), and lysine 226. UTP is bound by residues 190–195 (KTKPTQ) and lysine 226. A Glutamine amidotransferase type-1 domain is found at 295–537 (HIGLIGKYVE…VKAAHEHSVK (243 aa)). Glycine 357 contributes to the L-glutamine binding site. Cysteine 384 acts as the Nucleophile; for glutamine hydrolysis in catalysis. L-glutamine-binding positions include 385 to 388 (LGMQ), glutamate 408, and arginine 465. Residues histidine 510 and glutamate 512 contribute to the active site.

The protein belongs to the CTP synthase family. As to quaternary structure, homotetramer.

The catalysed reaction is UTP + L-glutamine + ATP + H2O = CTP + L-glutamate + ADP + phosphate + 2 H(+). It catalyses the reaction L-glutamine + H2O = L-glutamate + NH4(+). It carries out the reaction UTP + NH4(+) + ATP = CTP + ADP + phosphate + 2 H(+). Its pathway is pyrimidine metabolism; CTP biosynthesis via de novo pathway; CTP from UDP: step 2/2. Its activity is regulated as follows. Allosterically activated by GTP, when glutamine is the substrate; GTP has no effect on the reaction when ammonia is the substrate. The allosteric effector GTP functions by stabilizing the protein conformation that binds the tetrahedral intermediate(s) formed during glutamine hydrolysis. Inhibited by the product CTP, via allosteric rather than competitive inhibition. Catalyzes the ATP-dependent amination of UTP to CTP with either L-glutamine or ammonia as the source of nitrogen. Regulates intracellular CTP levels through interactions with the four ribonucleotide triphosphates. In Christiangramia forsetii (strain DSM 17595 / CGMCC 1.15422 / KT0803) (Gramella forsetii), this protein is CTP synthase.